A 440-amino-acid chain; its full sequence is Beta-1,3-galactosyl-O-glycosyl-glycoprotein beta-1,6-N-acetylglucosaminyltransferase 3 (440 aa).

At 1 to 12 the chain is on the cytoplasmic side; it reads MKMTGWKKKLCR. A helical; Signal-anchor for type II membrane protein membrane pass occupies residues 13–30; the sequence is GHHLWALGCYMLLAVVAL. Residues 31–440 lie on the Lumenal side of the membrane; the sequence is RLSLRLKCDV…RHKAIYGTEL (410 aa). N-linked (GlcNAc...) asparagine glycans are attached at residues asparagine 72 and asparagine 108. Cystine bridges form between cysteine 73–cysteine 230, cysteine 164–cysteine 384, cysteine 185–cysteine 212, and cysteine 393–cysteine 425.

This sequence belongs to the glycosyltransferase 14 family. N-glycosylated. As to expression, primarily expressed in mucus-secreting tissues.

It is found in the golgi apparatus membrane. It carries out the reaction a 3-O-[beta-D-galactosyl-(1-&gt;3)-N-acetyl-alpha-D-galactosaminyl]-L-seryl-[protein] + UDP-N-acetyl-alpha-D-glucosamine = 3-O-{beta-D-galactosyl-(1-&gt;3)-[N-acetyl-beta-D-glucosaminyl-(1-&gt;6)]-N-acetyl-alpha-D-galactosaminyl}-L-seryl-[protein] + UDP + H(+). It catalyses the reaction a 3-O-[beta-D-galactosyl-(1-&gt;3)-N-acetyl-alpha-D-galactosaminyl]-L-threonyl-[protein] + UDP-N-acetyl-alpha-D-glucosamine = a 3-O-{beta-D-galactosyl-(1-&gt;3)-[N-acetyl-beta-D-glucosaminyl-(1-&gt;6)]-N-acetyl-alpha-D-galactosaminyl}-L-threonyl-[protein] + UDP + H(+). The enzyme catalyses a beta-D-Gal-(1-&gt;4)-beta-D-GlcNAc-(1-&gt;3)-beta-D-Gal-(1-&gt;4)-beta-D-GlcNAc derivative + UDP-N-acetyl-alpha-D-glucosamine = a beta-D-Gal-(1-&gt;4)-beta-D-GlcNAc-(1-&gt;3)-[beta-D-GlcNAc-(1-&gt;6)]-beta-D-Gal-(1-&gt;4)-N-acetyl-beta-D-glucosaminyl derivative + UDP + H(+). The catalysed reaction is 3-O-[N-acetyl-beta-D-glucosaminyl-(1-&gt;3)-N-acetyl-alpha-D-galactosaminyl]-L-seryl-[protein] + UDP-N-acetyl-alpha-D-glucosamine = 3-O-[N-acetyl-beta-D-glucosaminyl-(1-&gt;3)-[N-acetyl-beta-D-glucosaminyl-(1-&gt;6)]-N-acetyl-alpha-D-galactosaminyl]-L-seryl-[protein] + UDP + H(+). It carries out the reaction a 3-O-[N-acetyl-beta-D-glucosaminyl-(1-&gt;3)-N-acetyl-alpha-D-galactosaminyl]-L-threonyl-[protein] + UDP-N-acetyl-alpha-D-glucosamine = 3-O-[N-acetyl-beta-D-glucosaminyl-(1-&gt;3)-[N-acetyl-beta-D-glucosaminyl-(1-&gt;6)]-N-acetyl-alpha-D-galactosaminyl]-L-threonyl-[protein] + UDP + H(+). It participates in protein modification; protein glycosylation. Glycosyltransferase that can synthesize all known mucin beta 6 N-acetylglucosaminides. Mediates core 2 and core 4 O-glycan branching, 2 important steps in mucin-type biosynthesis. Also has I-branching enzyme activity by converting linear into branched poly-N-acetyllactosaminoglycans, leading to introduce the blood group I antigen during embryonic development. In Bos taurus (Bovine), this protein is Beta-1,3-galactosyl-O-glycosyl-glycoprotein beta-1,6-N-acetylglucosaminyltransferase 3 (GCNT3).